The chain runs to 433 residues: Protein root UVB sensitive 2, chloroplastic (433 aa).

It belongs to the RUS1 family. As to quaternary structure, interacts (via the DUF647 domain) with RUS1 (via the DUF647 domain). As to expression, expressed throughout the plant, with a higher expression near the root apical meristem, in the cortex region of the root elongation zone, in lateral roots and emerging lateral roots. Not detected in extreme root apical meristem or root cap.

Its subcellular location is the plastid. Involved in a root UV-B sensing pathway and in the protection against the hypersensitivity to very low-fluence-rate (VLF) UV-B. RSU1 and RUS2 are probably both negative modulators of the same UV-B perception pathway, which when overstimulated in the roots causes a block to postgermination development. Required for polar auxin transport and to maintain the normal levels of PIN proteins in the root. This is Protein root UVB sensitive 2, chloroplastic from Arabidopsis thaliana (Mouse-ear cress).